We begin with the raw amino-acid sequence, 421 residues long: ATP-dependent RNA helicase RhlB (421 aa).

A Q motif motif is present at residues 9–37; that stretch reads QKFSDFALHPKVVEVLEKKGFHNCTPIQA. In terms of domain architecture, Helicase ATP-binding spans 40 to 219; the sequence is LPLTLAGRDV…FEQMNNAEYI (180 aa). 53 to 60 contributes to the ATP binding site; it reads AQTGTGKT. Positions 165–168 match the DEAD box motif; that stretch reads DEAD. Residues 245–390 form the Helicase C-terminal domain; sequence RLLQTLIEEE…VSKYNPDALM (146 aa). The disordered stretch occupies residues 392–421; the sequence is DLPKPLRLTRPRTGNGPRRTGAPRNRRRSG. The segment covering 402 to 414 has biased composition (low complexity); it reads PRTGNGPRRTGAP.

Belongs to the DEAD box helicase family. RhlB subfamily. In terms of assembly, component of the RNA degradosome, which is a multiprotein complex involved in RNA processing and mRNA degradation.

It is found in the cytoplasm. It carries out the reaction ATP + H2O = ADP + phosphate + H(+). Its function is as follows. DEAD-box RNA helicase involved in RNA degradation. Has RNA-dependent ATPase activity and unwinds double-stranded RNA. The sequence is that of ATP-dependent RNA helicase RhlB from Shigella boydii serotype 18 (strain CDC 3083-94 / BS512).